Reading from the N-terminus, the 38-residue chain is Histone H5 (38 aa).

Over residues 1-15 the composition is skewed to pro residues; that stretch reads TESPIPVPAPAPAAK. Positions 1–38 are disordered; that stretch reads TESPIPVPAPAPAAKPKPKRVSKRPASHPPYSDMIAAA. A compositionally biased stretch (basic residues) spans 16–26; that stretch reads PKPKRVSKRPA.

This sequence belongs to the histone H1/H5 family. In terms of tissue distribution, erythroid cells.

It is found in the nucleus. The protein localises to the chromosome. In terms of biological role, histone H5 performs the same function as H1, being necessary for the condensation of nucleosome chains into higher order structures, and replaces histone H1 in certain cells. This Columba livia (Rock dove) protein is Histone H5.